Consider the following 379-residue polypeptide: Cystathionine gamma-lyase (379 aa).

An N6-(pyridoxal phosphate)lysine modification is found at K195.

It belongs to the trans-sulfuration enzymes family. It depends on pyridoxal 5'-phosphate as a cofactor.

It catalyses the reaction L,L-cystathionine + H2O = 2-oxobutanoate + L-cysteine + NH4(+). It carries out the reaction L-homocysteine + H2O = 2-oxobutanoate + hydrogen sulfide + NH4(+) + H(+). Its function is as follows. Catalyzes the conversion of cystathionine to cysteine, and homocysteine to sulfide. This is Cystathionine gamma-lyase (mccB) from Bacillus subtilis (strain 168).